The primary structure comprises 655 residues: Phosphatidylinositol-3,5-bisphosphate 3-phosphatase MTMR6 (655 aa).

Positions 1-101 constitute a GRAM domain; that stretch reads MEHIRTTKVE…YNSLLQLSKQ (101 aa). Positions 2–141 are interaction with RAB1B; that stretch reads EHIRTTKVEQ…AEYERMGVPN (140 aa). The residue at position 108 (Tyr-108) is a Phosphotyrosine. One can recognise a Myotubularin phosphatase domain in the interval 124–537; it reads GWQLIDLAAE…FNFKFWRNMY (414 aa). Asn-286, Asn-311, and Ile-312 together coordinate a 1,2-diacyl-sn-glycero-3-phospho-(1D-myo-inositol-3,5-bisphosphate). Positions 286, 311, and 312 each coordinate a 1,2-diacyl-sn-glycero-3-phospho-(1D-myo-inositol-3-phosphate). Cys-374 functions as the Phosphocysteine intermediate in the catalytic mechanism. A 1,2-diacyl-sn-glycero-3-phospho-(1D-myo-inositol-3,5-bisphosphate) contacts are provided by Ser-375, Asp-376, Gly-377, Trp-378, Asp-379, Arg-380, Lys-416, and Arg-420. A 1,2-diacyl-sn-glycero-3-phospho-(1D-myo-inositol-3-phosphate) contacts are provided by Ser-375, Asp-376, Gly-377, Trp-378, Asp-379, and Arg-380. Arg-420 provides a ligand contact to a 1,2-diacyl-sn-glycero-3-phospho-(1D-myo-inositol-3-phosphate). Positions 547–581 form a coiled coil; that stretch reads RQSVLNIIMNMNEQNKQLEEDVKDLEAKIKQCKSG. Ser-595, Ser-623, and Ser-645 each carry phosphoserine.

It belongs to the protein-tyrosine phosphatase family. Non-receptor class myotubularin subfamily. Homodimer. Heterodimer (via C-terminus) with MTMR9 (via C-terminus). Interacts with ALKBH4. Interacts with KCNN4. Interacts (via GRAM domain) with RAB1B (in GDP-bound form); the interaction regulates MTMR6 recruitment to the endoplasmic reticulum-Golgi intermediate compartment.

It is found in the cytoplasm. It localises to the endoplasmic reticulum. Its subcellular location is the cell projection. The protein localises to the ruffle membrane. The protein resides in the endoplasmic reticulum-Golgi intermediate compartment. It is found in the perinuclear region. The enzyme catalyses a 1,2-diacyl-sn-glycero-3-phospho-(1D-myo-inositol-3,5-bisphosphate) + H2O = a 1,2-diacyl-sn-glycero-3-phospho-(1D-myo-inositol-5-phosphate) + phosphate. It catalyses the reaction a 1,2-diacyl-sn-glycero-3-phospho-(1D-myo-inositol-3-phosphate) + H2O = a 1,2-diacyl-sn-glycero-3-phospho-(1D-myo-inositol) + phosphate. The catalysed reaction is 1,2-dioctanoyl-sn-glycero-3-phospho-(1D-myo-inositol-3,5-bisphosphate) + H2O = 1,2-dioctanoyl-sn-glycero-3-phospho-(1D-myo-inositol-5-phosphate) + phosphate. It carries out the reaction 1,2-dioctanoyl-sn-glycero-3-phospho-(1-D-myo-inositol-3-phosphate) + H2O = 1,2-dioctanoyl-sn-glycero-3-phospho-(1D-myo-inositol) + phosphate. Its activity is regulated as follows. Allosterically activated by phosphatidylserine and/or phosphatidylinositol 4-phosphate (PtdIns(4)P), and phosphatidylinositol 5-phosphate (PtdIns(5)P). Interaction with MTMR9 increases catalytic activity towards phosphatidylinositol 3,5-bisphosphate. Functionally, lipid phosphatase that specifically dephosphorylates the D-3 position of phosphatidylinositol 3-phosphate and phosphatidylinositol 3,5-bisphosphate, generating phosphatidylinositol and phosphatidylinositol 5-phosphate. Binds with high affinity to phosphatidylinositol 3,5-bisphosphate (PtdIns(3,5)P2) but also to phosphatidylinositol 3-phosphate (PtdIns(3)P), phosphatidylinositol 4-phosphate (PtdIns(4)P), and phosphatidylinositol 5-phosphate (PtdIns(5)P), phosphatidic acid and phosphatidylserine. Negatively regulates ER-Golgi protein transport. Probably in association with MTMR9, plays a role in the late stages of macropinocytosis by dephosphorylating phosphatidylinositol 3-phosphate in membrane ruffles. Acts as a negative regulator of KCNN4/KCa3.1 channel activity in CD4(+) T-cells possibly by decreasing intracellular levels of phosphatidylinositol 3-phosphate. Negatively regulates proliferation of reactivated CD4(+) T-cells. In complex with MTMR9, negatively regulates DNA damage-induced apoptosis. The formation of the MTMR6-MTMR9 complex stabilizes both MTMR6 and MTMR9 protein levels. The sequence is that of Phosphatidylinositol-3,5-bisphosphate 3-phosphatase MTMR6 from Rattus norvegicus (Rat).